The sequence spans 682 residues: Serine/threonine-protein kinase PAK 6 (682 aa).

4 disordered regions span residues 1–30, 132–170, 200–256, and 270–367; these read MFRK…DPKE, SPQS…QALP, LQSS…QESS, and PATG…NLYL. The CRIB domain occupies 12–25; it reads ISAPQNFQHRVHTS. The segment at 26 to 407 is linker; sequence FDPKEGKFVG…VVDQGDPRLL (382 aa). Polar residues-rich tracts occupy residues 270–279 and 297–334; these read PATGAASSSK and KDSS…QKSL. In terms of domain architecture, Protein kinase spans 408-659; sequence LDSYVKIGEG…AQELLDHPFL (252 aa). Residues 414–422 and K437 each bind ATP; that span reads IGEGSTGIV. The active-site Proton acceptor is the D527. S561 is subject to Phosphoserine; by autocatalysis.

Belongs to the protein kinase superfamily. STE Ser/Thr protein kinase family. STE20 subfamily. In terms of assembly, interacts tightly with GTP-bound but not GDP-bound CDC42/p21 and RAC1. Interacts with the androgen receptor AR. Interacts with IQGAP1 and PPM1B. In terms of processing, autophosphorylated. Phosphorylated by MAP2K6/MAPKK6, leading to PAK6 activation.

The protein resides in the cytoplasm. It is found in the nucleus. It carries out the reaction L-seryl-[protein] + ATP = O-phospho-L-seryl-[protein] + ADP + H(+). The enzyme catalyses L-threonyl-[protein] + ATP = O-phospho-L-threonyl-[protein] + ADP + H(+). Its function is as follows. Serine/threonine protein kinase that plays a role in the regulation of gene transcription. The kinase activity is induced by various effectors including AR or MAP2K6/MAPKK6. Phosphorylates the DNA-binding domain of androgen receptor/AR and thereby inhibits AR-mediated transcription. Also inhibits ESR1-mediated transcription. May play a role in cytoskeleton regulation by interacting with IQGAP1. May protect cells from apoptosis through phosphorylation of BAD. The chain is Serine/threonine-protein kinase PAK 6 (Pak6) from Mus musculus (Mouse).